The primary structure comprises 116 residues: Selenoprotein H (116 aa).

Lys-20 is modified (N6-acetyllysine). A cross-link (cysteinyl-selenocysteine (Cys-Sec); redox-active) is located at residues Cys-35–Sec-38. Sec-38 is a non-standard amino acid (selenocysteine).

The protein belongs to the SelWTH family.

Functionally, may be involved in a redox-related process. The sequence is that of Selenoprotein H from Mus musculus (Mouse).